We begin with the raw amino-acid sequence, 583 residues long: Dynein axonemal assembly factor 3 (583 aa).

Residues 455 to 534 (RGGGDSAVES…RADQIPPLEA (80 aa)) form a disordered region.

The protein belongs to the DNAAF3 family.

It localises to the cytoplasm. The protein resides in the dynein axonemal particle. Its function is as follows. Required for the assembly of axonemal inner and outer dynein arms. Involved in preassembly of dyneins into complexes before their transport into cilia. The polypeptide is Dynein axonemal assembly factor 3 (Dnaaf3) (Rattus norvegicus (Rat)).